The chain runs to 318 residues: D-alanine--D-alanine ligase (318 aa).

The ATP-grasp domain maps to 116–311 (KQVWQSLGIP…FQQLVLAILA (196 aa)). Residue 142-197 (STELGFPLIVKPAHEGSSIGMAKVNSAQELVAAWQDAAKYDSQVLVEQWIHGPEFT) participates in ATP binding. 3 residues coordinate Mg(2+): Asp265, Glu278, and Asn280.

It belongs to the D-alanine--D-alanine ligase family. The cofactor is Mg(2+). Requires Mn(2+) as cofactor.

The protein resides in the cytoplasm. It catalyses the reaction 2 D-alanine + ATP = D-alanyl-D-alanine + ADP + phosphate + H(+). It participates in cell wall biogenesis; peptidoglycan biosynthesis. Functionally, cell wall formation. This is D-alanine--D-alanine ligase from Pseudomonas putida (strain GB-1).